The following is a 169-amino-acid chain: MMRFLNHCSQGRSAWLLMILTALILESSALYFQHVMKLQPCVMCIYERVALFGVLSAGILGVIAPKTPLRWLAIILWIYSAWGGLQLAWQHTMMQLHPSPFNTCDFFVNFPSWLALNQWLPSVFEATGDCSVRQWQFLTLEMPQWLVGIFAAYLVVAALVLISQFFSRK.

The Cytoplasmic portion of the chain corresponds to Met-1–Ala-14. A helical transmembrane segment spans residues Trp-15 to Tyr-31. Topologically, residues Phe-32 to Val-49 are periplasmic. The cysteines at positions 41 and 44 are disulfide-linked. A helical transmembrane segment spans residues Ala-50–Pro-65. The Cytoplasmic portion of the chain corresponds to Lys-66–Trp-71. The chain crosses the membrane as a helical span at residues Leu-72–Trp-89. The Periplasmic portion of the chain corresponds to Gln-90 to Gln-144. Cys-104 and Cys-130 are oxidised to a cystine. Residues Trp-145–Ser-163 traverse the membrane as a helical segment. At Gln-164–Lys-169 the chain is on the cytoplasmic side.

The protein belongs to the DsbB family.

It is found in the cell inner membrane. Required for disulfide bond formation in some periplasmic proteins. Acts by oxidizing the DsbA protein. The polypeptide is Disulfide bond formation protein B (Photorhabdus laumondii subsp. laumondii (strain DSM 15139 / CIP 105565 / TT01) (Photorhabdus luminescens subsp. laumondii)).